A 97-amino-acid polypeptide reads, in one-letter code: Small nuclear ribonucleoprotein Sm D3 (97 aa).

Residues 3–75 (LCIKLLHETQ…IRFLIVPDML (73 aa)) form the Sm domain.

It belongs to the snRNP core protein family. As to quaternary structure, belongs to the 40S cdc5-associated complex (or cwf complex), a spliceosome sub-complex reminiscent of a late-stage spliceosome composed of the U2, U5 and U6 snRNAs and at least brr2, cdc5, cwf2/prp3, cwf3/syf1, cwf4/syf3, cwf5/ecm2, spp42/cwf6, cwf7/spf27, cwf8, cwf9, cwf10, cwf11, cwf12, prp45/cwf13, cwf14, cwf15, cwf16, cwf17, cwf18, cwf19, cwf20, cwf21, cwf22, cwf23, cwf24, cwf25, cwf26, cyp7/cwf27, cwf28, cwf29/ist3, lea1, msl1, prp5/cwf1, prp10, prp12/sap130, prp17, prp22, sap61, sap62, sap114, sap145, slu7, smb1, smd1, smd3, smf1, smg1 and syf2. Interacts with saf5; the interaction is direct.

Its subcellular location is the nucleus. It localises to the cytoplasm. It is found in the cytosol. In terms of biological role, plays a role in pre-mRNA splicing as a core component of the spliceosomal U1, U2, U4 and U5 small nuclear ribonucleoproteins (snRNPs), the building blocks of the spliceosome. The protein is Small nuclear ribonucleoprotein Sm D3 (smd3) of Schizosaccharomyces pombe (strain 972 / ATCC 24843) (Fission yeast).